We begin with the raw amino-acid sequence, 439 residues long: Ribosomal protein uS12 methylthiotransferase RimO (439 aa).

The region spanning Pro4 to Pro114 is the MTTase N-terminal domain. Residues Cys13, Cys49, Cys78, Cys147, Cys151, and Cys154 each coordinate [4Fe-4S] cluster. One can recognise a Radical SAM core domain in the interval Leu133–Ala370. Residues Ser373 to Ala439 form the TRAM domain.

This sequence belongs to the methylthiotransferase family. RimO subfamily. [4Fe-4S] cluster is required as a cofactor.

The protein localises to the cytoplasm. It carries out the reaction L-aspartate(89)-[ribosomal protein uS12]-hydrogen + (sulfur carrier)-SH + AH2 + 2 S-adenosyl-L-methionine = 3-methylsulfanyl-L-aspartate(89)-[ribosomal protein uS12]-hydrogen + (sulfur carrier)-H + 5'-deoxyadenosine + L-methionine + A + S-adenosyl-L-homocysteine + 2 H(+). Its function is as follows. Catalyzes the methylthiolation of an aspartic acid residue of ribosomal protein uS12. This chain is Ribosomal protein uS12 methylthiotransferase RimO, found in Bordetella parapertussis (strain 12822 / ATCC BAA-587 / NCTC 13253).